The primary structure comprises 135 residues: Large ribosomal subunit protein uL18 (135 aa).

The tract at residues 1–23 (MAQTQADTAARKPVGQSVSATRR) is disordered.

Belongs to the universal ribosomal protein uL18 family. In terms of assembly, part of the 50S ribosomal subunit; part of the 5S rRNA/L5/L18/L25 subcomplex. Contacts the 5S and 23S rRNAs.

Its function is as follows. This is one of the proteins that bind and probably mediate the attachment of the 5S RNA into the large ribosomal subunit, where it forms part of the central protuberance. The chain is Large ribosomal subunit protein uL18 from Mycobacterium marinum (strain ATCC BAA-535 / M).